Reading from the N-terminus, the 384-residue chain is Dual-specificity RNA methyltransferase RlmN (384 aa).

The active-site Proton acceptor is the Glu105. The region spanning 111-350 is the Radical SAM core domain; that stretch reads EDDRATLCVS…TIVRKTRGDD (240 aa). Cys118 and Cys355 are disulfide-bonded. Residues Cys125, Cys129, and Cys132 each coordinate [4Fe-4S] cluster. S-adenosyl-L-methionine is bound by residues 179 to 180, Ser211, 233 to 235, and Asn312; these read GE and SLH. Cys355 serves as the catalytic S-methylcysteine intermediate.

The protein belongs to the radical SAM superfamily. RlmN family. It depends on [4Fe-4S] cluster as a cofactor.

It is found in the cytoplasm. The catalysed reaction is adenosine(2503) in 23S rRNA + 2 reduced [2Fe-2S]-[ferredoxin] + 2 S-adenosyl-L-methionine = 2-methyladenosine(2503) in 23S rRNA + 5'-deoxyadenosine + L-methionine + 2 oxidized [2Fe-2S]-[ferredoxin] + S-adenosyl-L-homocysteine. It catalyses the reaction adenosine(37) in tRNA + 2 reduced [2Fe-2S]-[ferredoxin] + 2 S-adenosyl-L-methionine = 2-methyladenosine(37) in tRNA + 5'-deoxyadenosine + L-methionine + 2 oxidized [2Fe-2S]-[ferredoxin] + S-adenosyl-L-homocysteine. Functionally, specifically methylates position 2 of adenine 2503 in 23S rRNA and position 2 of adenine 37 in tRNAs. m2A2503 modification seems to play a crucial role in the proofreading step occurring at the peptidyl transferase center and thus would serve to optimize ribosomal fidelity. This Shigella boydii serotype 18 (strain CDC 3083-94 / BS512) protein is Dual-specificity RNA methyltransferase RlmN.